A 306-amino-acid polypeptide reads, in one-letter code: MNQYKNFIMQFEDIVGNNNVLIDEPMKKHTSFKVGGPADLLITPTTLEQVKDSIILCRNNSIPYYIIGNGSNLLVRDGGIRGVVIKFLKLGDIKVEGDRVIAQSGAPLTNICNEALKSNLGGLEFACGIPGSVGGAVTMNAGAYNGEISQVIESAKVIDKDGNVFLLNKEQLDLGYRMSAIQKYHYIVLEVTFKLHNSEYDTIKNRIMDLNRRRTEKQPLEYPSAGSTFKRPEGHFAAKLIEDTGLKGESIGGAQVSEKHSGFIINKGGATAGDILNLIEFVQNKVMEKFQVDLHTEVRIIGEENN.

An FAD-binding PCMH-type domain is found at 34–198 (VGGPADLLIT…LEVTFKLHNS (165 aa)). Arg-177 is a catalytic residue. The active-site Proton donor is Ser-227. The active site involves Glu-297.

Belongs to the MurB family. Requires FAD as cofactor.

It localises to the cytoplasm. It carries out the reaction UDP-N-acetyl-alpha-D-muramate + NADP(+) = UDP-N-acetyl-3-O-(1-carboxyvinyl)-alpha-D-glucosamine + NADPH + H(+). Its pathway is cell wall biogenesis; peptidoglycan biosynthesis. Its function is as follows. Cell wall formation. The sequence is that of UDP-N-acetylenolpyruvoylglucosamine reductase from Clostridium botulinum (strain Langeland / NCTC 10281 / Type F).